The primary structure comprises 136 residues: Monothiol glutaredoxin-S3 (136 aa).

The region spanning 18–135 is the Glutaredoxin domain; the sequence is EREVRRAVEE…PVLKQAGALW (118 aa). Position 38 (Cys38) interacts with [2Fe-2S] cluster. A Responsive for interaction with TGA factors motif is present at residues 133-136; the sequence is ALWL.

Belongs to the glutaredoxin family. CC-type subfamily.

It localises to the cytoplasm. The protein resides in the nucleus. Functionally, may only reduce GSH-thiol disulfides, but not protein disulfides. This is Monothiol glutaredoxin-S3 (GRXS3) from Oryza sativa subsp. japonica (Rice).